The primary structure comprises 68 residues: Guanine nucleotide-binding protein G(I)/G(S)/G(O) subunit gamma-10 (68 aa).

The residue at position 2 (Ser2) is an N-acetylserine. Position 65 is a cysteine methyl ester (Cys65). Cys65 carries the S-geranylgeranyl cysteine lipid modification. Positions 66–68 (ALL) are cleaved as a propeptide — removed in mature form.

It belongs to the G protein gamma family. G proteins are composed of 3 units, alpha, beta and gamma. As to expression, abundantly and ubiquitously expressed.

The protein localises to the cell membrane. In terms of biological role, guanine nucleotide-binding proteins (G proteins) are involved as a modulator or transducer in various transmembrane signaling systems. The beta and gamma chains are required for the GTPase activity, for replacement of GDP by GTP, and for G protein-effector interaction. Interacts with beta-1 and beta-2, but not with beta-3. In Homo sapiens (Human), this protein is Guanine nucleotide-binding protein G(I)/G(S)/G(O) subunit gamma-10 (GNG10).